Here is a 248-residue protein sequence, read N- to C-terminus: Pyridoxine 5'-phosphate synthase (248 aa).

Asparagine 9 is a 3-amino-2-oxopropyl phosphate binding site. Aspartate 11–histidine 12 serves as a coordination point for 1-deoxy-D-xylulose 5-phosphate. Arginine 20 contributes to the 3-amino-2-oxopropyl phosphate binding site. Residue histidine 45 is the Proton acceptor of the active site. 1-deoxy-D-xylulose 5-phosphate is bound by residues arginine 47 and histidine 52. Glutamate 72 (proton acceptor) is an active-site residue. Threonine 102 contributes to the 1-deoxy-D-xylulose 5-phosphate binding site. The active-site Proton donor is histidine 193. Residues glycine 194 and glycine 215–histidine 216 each bind 3-amino-2-oxopropyl phosphate.

Belongs to the PNP synthase family. As to quaternary structure, homooctamer; tetramer of dimers.

The protein resides in the cytoplasm. The catalysed reaction is 3-amino-2-oxopropyl phosphate + 1-deoxy-D-xylulose 5-phosphate = pyridoxine 5'-phosphate + phosphate + 2 H2O + H(+). It participates in cofactor biosynthesis; pyridoxine 5'-phosphate biosynthesis; pyridoxine 5'-phosphate from D-erythrose 4-phosphate: step 5/5. Its function is as follows. Catalyzes the complicated ring closure reaction between the two acyclic compounds 1-deoxy-D-xylulose-5-phosphate (DXP) and 3-amino-2-oxopropyl phosphate (1-amino-acetone-3-phosphate or AAP) to form pyridoxine 5'-phosphate (PNP) and inorganic phosphate. This chain is Pyridoxine 5'-phosphate synthase, found in Hydrogenovibrio crunogenus (strain DSM 25203 / XCL-2) (Thiomicrospira crunogena).